The following is a 339-amino-acid chain: Ketol-acid reductoisomerase (NADP(+)) (339 aa).

Residues 1-182 enclose the KARI N-terminal Rossmann domain; sequence MPNRYYEKDG…GCLKAGVIDT (182 aa). NADP(+) contacts are provided by residues 25–28, Ser-51, Ser-53, and 83–86; these read YGSQ and DHIQ. Residue His-108 is part of the active site. Gly-134 contacts NADP(+). The KARI C-terminal knotted domain maps to 183 to 328; the sequence is NFREETESDL…RELREMMTFL (146 aa). The Mg(2+) site is built by Asp-191, Glu-195, Glu-227, and Glu-231. Ser-252 provides a ligand contact to substrate.

It belongs to the ketol-acid reductoisomerase family. Requires Mg(2+) as cofactor.

The enzyme catalyses (2R)-2,3-dihydroxy-3-methylbutanoate + NADP(+) = (2S)-2-acetolactate + NADPH + H(+). It catalyses the reaction (2R,3R)-2,3-dihydroxy-3-methylpentanoate + NADP(+) = (S)-2-ethyl-2-hydroxy-3-oxobutanoate + NADPH + H(+). It functions in the pathway amino-acid biosynthesis; L-isoleucine biosynthesis; L-isoleucine from 2-oxobutanoate: step 2/4. It participates in amino-acid biosynthesis; L-valine biosynthesis; L-valine from pyruvate: step 2/4. In terms of biological role, involved in the biosynthesis of branched-chain amino acids (BCAA). Catalyzes an alkyl-migration followed by a ketol-acid reduction of (S)-2-acetolactate (S2AL) to yield (R)-2,3-dihydroxy-isovalerate. In the isomerase reaction, S2AL is rearranged via a Mg-dependent methyl migration to produce 3-hydroxy-3-methyl-2-ketobutyrate (HMKB). In the reductase reaction, this 2-ketoacid undergoes a metal-dependent reduction by NADPH to yield (R)-2,3-dihydroxy-isovalerate. The polypeptide is Ketol-acid reductoisomerase (NADP(+)) (Solibacter usitatus (strain Ellin6076)).